The sequence spans 1278 residues: MATSKSQQFQLIEGMELQITVTGLPNGSSVRAEFHLKNCTRAWILHWGCIYQGNNHWYIPSEHSSKQGALQTTFVKSGDAYVVILELRDPRVRAIEFVLKDGSHNRWLRQHNGNFRVEIPWNDLHAHHRIPKTLIERRAHKIWDRKGRPQSSAREQQIDYDNAVRELHAELARGISLDELQANSTVPVEKEETSEPHHTMIQSYRRKHDVQKWLQKYTEPINRSGSVKSSALAELSKRSVGQENLVSQKSFHVRNYEITVLQRDVKGDCRLWIATNMAGPTVLHWGVAKSSAGEWLIPPPDVLPEKSKFVHGACQTQFTDMSSREHSYQFIDINLKRGGFVGIQFVIWSGGYWVNNNGANFVVNLKSADSTSGKLDVDEKYVLKWLLDEISEREKEAERSLMHRFNIATELTERCKDEGEGGCIGIMVWMRFMATRHLTWNKNYNVKPREISEALERFTNLMEKIYLQQPNKREIVRLTMALVGRGGQGDVGQRIRDEILVIQRNNHCKSGMMEEWHQKLHNNSSADDVIICEALLNYVRSDFRIDAYWQTLQTNGLTKERLASYDRPIVSEPRFRSDSKEGLIRDLTMYLKTLKAVHSGADLESAIDTFLSPSKGHHVFAVNGLSPKLQDLLNLVKRLVREENTEPLIEKLVDARIQLHPALRAPRTRAKDLLFLDIALESCFKTTIEKRLISLNFNNPPEIIYVICVVLENLCLSIVNNEEIIFCTKDWYRVSEAYRPHDVQWALQTKAVLDRLQLVLADRCQHYFTIIQPTAKYLGQLLRVDKHGIDVFTEEVIRAGPGAVLSTLVNRFDPSLRKIANLGCWQVISSADAYGFVVCVNELIVVQNKFYSKPTVIIASKVTGEEEIPAGVVAVLTPSMIDVLSHVSIRARNSKICFATCFDQNVLSNLKSKEGRAISIHTKSTGLVISDGNNSDVSVRHIFISSVPRGVISKGKKFCGHYVISSKEFTDERVGSKSYNIKFLRERVPSWIKIPTSAALPFGTFENILSDDSNKDVARRISVLKDSLNRGDLTKLKSIQEAILQMSAPMALRNELITKLRSERMPYLGDESGWNRSWVAIKKVWASKWNERAYVSCKKNKLDHDAVCMAVLIQEVICGDYAFVIHTNNPVSGDSSEIYTEIVKGLGETLVGAYPGRAMSFITKKTNLKSPTVISYPSKRIGLYSKPSIIFRSDSNNEDLEGNAGAGLYDSVIMDEAEEVVVDYSREPLIMDKSFRVRLFSAIAEAGNVIESIYGCPQDIEGVVKGGHIYIVQARPQV.

A signal peptide spans 1-23 (MATSKSQQFQLIEGMELQITVTG). His886 (tele-phosphohistidine intermediate) is an active-site residue.

Belongs to the PEP-utilizing enzyme family. Homodimer. It depends on Mg(2+) as a cofactor.

The enzyme catalyses [(1-&gt;4)-alpha-D-glucosyl](n) + n ATP + n H2O = [(1-&gt;4)-6-phospho-alpha-D-glucosyl](n) + n AMP + n phosphate + 2n H(+). Mediates the incorporation of phosphate into alpha-glucan, mostly at the C-6 position of glucose units. This is Alpha-glucan water dikinase 2 (GWD2) from Arabidopsis thaliana (Mouse-ear cress).